Consider the following 81-residue polypeptide: MKTLLLTTVVVTIVCLDLEYTLKCNKLVPLFYKTCPAGKNLCYKMFMVATPKVPVKRGCIDVCPKSSLLVKYVCCNTDRCN.

The N-terminal stretch at 1–21 (MKTLLLTTVVVTIVCLDLEYT) is a signal peptide. 4 disulfide bridges follow: Cys-24-Cys-42, Cys-35-Cys-59, Cys-63-Cys-74, and Cys-75-Cys-80.

It belongs to the three-finger toxin family. Short-chain subfamily. Type IA cytotoxin sub-subfamily. As to quaternary structure, monomer in solution; Homodimer and oligomer in the presence of negatively charged lipids forming a pore with a size ranging between 20 and 30 Angstroms. Expressed by the venom gland.

It is found in the secreted. Its subcellular location is the target cell membrane. Shows cytolytic activity on many different cells by forming pore in lipid membranes. In vivo, increases heart rate or kills the animal by cardiac arrest. In addition, it binds to heparin with high affinity, interacts with Kv channel-interacting protein 1 (KCNIP1) in a calcium-independent manner, and binds to integrin alpha-V/beta-3 (ITGAV/ITGB3) with moderate affinity. This is Cytotoxin from Naja sputatrix (Malayan spitting cobra).